A 139-amino-acid chain; its full sequence is Small ribosomal subunit protein bS6 (139 aa).

Residues 97-139 (TEASPMAKAKDERDSRRSSEGERRSAPAEATEEVKETAEKAAE) form a disordered region. A compositionally biased stretch (basic and acidic residues) spans 104 to 139 (KAKDERDSRRSSEGERRSAPAEATEEVKETAEKAAE).

It belongs to the bacterial ribosomal protein bS6 family.

Functionally, binds together with bS18 to 16S ribosomal RNA. The protein is Small ribosomal subunit protein bS6 of Shewanella sediminis (strain HAW-EB3).